We begin with the raw amino-acid sequence, 674 residues long: UvrABC system protein B (674 aa).

The region spanning 26-414 is the Helicase ATP-binding domain; the sequence is EGLDSGLAHQ…SGNDIAEQVV (389 aa). ATP is bound at residue 39–46; that stretch reads GVTGSGKT. The Beta-hairpin motif lies at 92–115; the sequence is YYDYYQPEAYVPTTDTFIEKDASV. A Helicase C-terminal domain is found at 432 to 586; that stretch reads QVDDLLSEIR…ALHNKKNGIT (155 aa). One can recognise a UVR domain in the interval 634–669; that stretch reads ELEIQRLETEMYDLAQNLEFEKAAEARDKIHTLRQQ.

The protein belongs to the UvrB family. As to quaternary structure, forms a heterotetramer with UvrA during the search for lesions. Interacts with UvrC in an incision complex.

The protein resides in the cytoplasm. Functionally, the UvrABC repair system catalyzes the recognition and processing of DNA lesions. A damage recognition complex composed of 2 UvrA and 2 UvrB subunits scans DNA for abnormalities. Upon binding of the UvrA(2)B(2) complex to a putative damaged site, the DNA wraps around one UvrB monomer. DNA wrap is dependent on ATP binding by UvrB and probably causes local melting of the DNA helix, facilitating insertion of UvrB beta-hairpin between the DNA strands. Then UvrB probes one DNA strand for the presence of a lesion. If a lesion is found the UvrA subunits dissociate and the UvrB-DNA preincision complex is formed. This complex is subsequently bound by UvrC and the second UvrB is released. If no lesion is found, the DNA wraps around the other UvrB subunit that will check the other stand for damage. In Photobacterium profundum (strain SS9), this protein is UvrABC system protein B.